A 354-amino-acid chain; its full sequence is Homer protein homolog 1 (354 aa).

One can recognise a WH1 domain in the interval 1 to 110 (MGEQPIFSTR…EKFQEFKEAA (110 aa)). N-acetylglycine is present on G2. Residues 114–172 (KEKSQEKMELTSTPSQESAGGDLQSPLTPESINGTDDERTPDLTQNSEPRPEPTQNALP) form a disordered region. 2 stretches are compositionally biased toward polar residues: residues 138-147 (SPLTPESING) and 155-172 (DLTQ…NALP). Residues 181 to 352 (KHWEAELATL…LRDNLAKLLE (172 aa)) are a coiled coil. Residues 290 to 354 (KLQEVEIRNK…DNLAKLLERS (65 aa)) are required for tetramerization. S306 carries the phosphoserine modification.

This sequence belongs to the Homer family. Tetramer; this tetrameric structure is critical for forming the high-order complex with SHANK1, which in turn is necessary for the structural and functional integrity of dendritic spines. Interacts with GRM1, GRM5, ITPR1, DNM3, RYR1, RYR2 and SHANK3. Interacts with IFT57 and OPHN1. Encodes a coiled-coil structure that mediates homo- and heteromultimerization. Interacts with SHANK1; forms high-order polymerized complex with a mesh-like network structure, at least composed of SHANK1, HOMER1 and DLGAP1; the complex formation is SHANK1 multimerization dependent. Interacts with NFATC4. Interacts with DAGLA (via PPXXF motif); this interaction is required for the cell membrane localization of DAGLA. Interacts with SRGAP2.

It localises to the cytoplasm. Its subcellular location is the postsynaptic density. It is found in the synapse. The protein localises to the cell projection. The protein resides in the dendritic spine. Its function is as follows. Postsynaptic density scaffolding protein. Binds and cross-links cytoplasmic regions of GRM1, GRM5, ITPR1, DNM3, RYR1, RYR2, SHANK1 and SHANK3. By physically linking GRM1 and GRM5 with ER-associated ITPR1 receptors, it aids the coupling of surface receptors to intracellular calcium release. May also couple GRM1 to PI3 kinase through its interaction with AGAP2. Forms a high-order complex with SHANK1, which in turn is necessary for the structural and functional integrity of dendritic spines. Negatively regulates T cell activation by inhibiting the calcineurin-NFAT pathway. Acts by competing with calcineurin/PPP3CA for NFAT protein binding, hence preventing NFAT activation by PPP3CA. In Bos taurus (Bovine), this protein is Homer protein homolog 1.